We begin with the raw amino-acid sequence, 330 residues long: Inactive hydroxysteroid dehydrogenase-like protein 1 (330 aa).

A2 carries the N-acetylalanine modification. The tract at residues 2–82 (AAVDSFYLLY…SGATDGIGRA (81 aa)) is required for mitochondria translocation. NADP(+) contacts are provided by residues 74–80 (GATDGIG), D125, and K222.

The protein belongs to the short-chain dehydrogenases/reductases (SDR) family. 17-beta-HSD 3 subfamily. Interacts with STYXL1.

It localises to the mitochondrion. This is Inactive hydroxysteroid dehydrogenase-like protein 1 (HSDL1) from Pongo abelii (Sumatran orangutan).